We begin with the raw amino-acid sequence, 78 residues long: Short neurotoxin SNTX14 (78 aa).

The first 21 residues, methionine 1–threonine 21, serve as a signal peptide directing secretion. Disulfide bonds link cysteine 24-cysteine 40, cysteine 33-cysteine 58, cysteine 62-cysteine 70, and cysteine 71-cysteine 76.

The protein belongs to the three-finger toxin family. Short-chain subfamily. As to expression, expressed by the venom gland.

It is found in the secreted. Its function is as follows. This three-finger toxin binds and inhibits the nicotinic acetylcholine receptor (nAChR). This chain is Short neurotoxin SNTX14, found in Ophiophagus hannah (King cobra).